We begin with the raw amino-acid sequence, 479 residues long: Phosphatidylinositol 4-kinase type 2-beta (479 aa).

Residues Met1–Glu10 are compositionally biased toward acidic residues. Positions Met1–His91 are disordered. Over residues Pro18–Ala34 the composition is skewed to low complexity. Residues Gly42–Glu62 are compositionally biased toward acidic residues. The PI3K/PI4K catalytic domain maps to Gly118 to Arg449. The tract at residues Ile124–Gly130 is G-loop. ATP is bound by residues Ser131 and Lys146. The segment at Glu151–Tyr153 is important for substrate binding. Positions Lys159 to Cys172 are important for interaction with membranes. Residues Gln255–Val258 and Arg269–Lys270 each bind ATP. Positions Lys262–Lys270 are important for interaction with membranes. The tract at residues Arg299–Asn307 is catalytic loop. Residues Ala340–Phe360 are activation loop. Asp342 is an ATP binding site. Residues Trp355–Trp364 form an important for interaction with membranes region.

Belongs to the PI3/PI4-kinase family. Type II PI4K subfamily.

It is found in the cytoplasm. The protein resides in the cytosol. It localises to the golgi apparatus membrane. The protein localises to the endoplasmic reticulum membrane. Its subcellular location is the cell membrane. It is found in the early endosome membrane. It catalyses the reaction a 1,2-diacyl-sn-glycero-3-phospho-(1D-myo-inositol) + ATP = a 1,2-diacyl-sn-glycero-3-phospho-(1D-myo-inositol 4-phosphate) + ADP + H(+). Contributes to the overall PI4-kinase activity of the cell. This contribution may be especially significant in plasma membrane, endosomal and Golgi compartments. The phosphorylation of phosphatidylinositol (PI) to PI4P is the first committed step in the generation of phosphatidylinositol 4,5-bisphosphate (PIP2), a precursor of the second messenger inositol 1,4,5-trisphosphate (InsP3). The chain is Phosphatidylinositol 4-kinase type 2-beta (PI4K2B) from Gallus gallus (Chicken).